The following is a 199-amino-acid chain: dITP/XTP pyrophosphatase (199 aa).

A substrate-binding site is contributed by 7-12; the sequence is TGNKGK. Aspartate 71 acts as the Proton acceptor in catalysis. Aspartate 71 provides a ligand contact to Mg(2+). Substrate is bound by residues alanine 72, 154-157, lysine 177, and 182-183; these read FGYD and HR.

It belongs to the HAM1 NTPase family. In terms of assembly, homodimer. Mg(2+) serves as cofactor.

It carries out the reaction XTP + H2O = XMP + diphosphate + H(+). The enzyme catalyses dITP + H2O = dIMP + diphosphate + H(+). The catalysed reaction is ITP + H2O = IMP + diphosphate + H(+). Its function is as follows. Pyrophosphatase that catalyzes the hydrolysis of nucleoside triphosphates to their monophosphate derivatives, with a high preference for the non-canonical purine nucleotides XTP (xanthosine triphosphate), dITP (deoxyinosine triphosphate) and ITP. Seems to function as a house-cleaning enzyme that removes non-canonical purine nucleotides from the nucleotide pool, thus preventing their incorporation into DNA/RNA and avoiding chromosomal lesions. This Bdellovibrio bacteriovorus (strain ATCC 15356 / DSM 50701 / NCIMB 9529 / HD100) protein is dITP/XTP pyrophosphatase.